A 950-amino-acid chain; its full sequence is Xylosyltransferase 1 (950 aa).

Residues 1–17 lie on the Cytoplasmic side of the membrane; it reads MVAAPSARRLVRRSHSA. A helical; Signal-anchor for type II membrane protein transmembrane segment spans residues 18-38; that stretch reads LLAALTVLLLQTLVGWNFSSL. Topologically, residues 39–950 are lumenal; sequence HSGAGERRGG…GAVKPDGRLR (912 aa). Positions 42-246 are disordered; the sequence is AGERRGGAAA…ELRYDQPPKC (205 aa). Positions 91–104 are enriched in low complexity; sequence PPARARARALAGCP. Positions 134 to 150 are enriched in basic and acidic residues; the sequence is KVRTDSNNENSVPKDFE. The span at 152–161 shows a compositional bias: polar residues; it reads VDNSNFAPRT. The segment covering 166–193 has biased composition (basic and acidic residues); it reads HQPELAKKPPSRQKELLKRRLEQEEKGK. An N-linked (GlcNAc...) asparagine glycan is attached at Asn-215. 4 cysteine pairs are disulfide-bonded: Cys-246/Cys-274, Cys-290/Cys-531, Cys-550/Cys-563, and Cys-552/Cys-561. UDP-alpha-D-xylose-binding positions include Val-322, Asp-350, and 379–381; that span reads TIW. Residue Asn-410 is glycosylated (N-linked (GlcNAc...) asparagine). 483–484 contributes to the UDP-alpha-D-xylose binding site; the sequence is DW. Residues Ser-564 and 587–588 each bind UDP-alpha-D-xylose; that span reads RK. 2 disulfides stabilise this stretch: Cys-664/Cys-918 and Cys-911/Cys-924. N-linked (GlcNAc...) asparagine glycosylation occurs at Asn-768. The interval 931–950 is disordered; the sequence is SFSPDPKSELGAVKPDGRLR.

Belongs to the glycosyltransferase 14 family. XylT subfamily. Monomer. The cofactor is a divalent metal cation. Contains 7 disulfide bonds. Post-translationally, N-glycosylated.

It is found in the golgi apparatus membrane. It carries out the reaction UDP-alpha-D-xylose + L-seryl-[protein] = 3-O-(beta-D-xylosyl)-L-seryl-[protein] + UDP + H(+). The protein operates within glycan metabolism; chondroitin sulfate biosynthesis. It participates in glycan metabolism; heparan sulfate biosynthesis. In terms of biological role, catalyzes the first step in the biosynthesis of chondroitin sulfate and dermatan sulfate proteoglycans, such as DCN. Transfers D-xylose from UDP-D-xylose to specific serine residues of the core protein. Required for normal maturation of chondrocytes during bone development, normal onset of ossification and normal embryonic and postnatal skeleton development, especially of the long bones. The polypeptide is Xylosyltransferase 1 (XYLT1) (Canis lupus familiaris (Dog)).